We begin with the raw amino-acid sequence, 545 residues long: Sulfite oxidase, mitochondrial (545 aa).

The transit peptide at 1–79 (MLLLHRAVVL…YQDHRCRAAQ (79 aa)) directs the protein to the mitochondrion. Residues 82 to 161 (TRIYTKEEVS…LAQYKVGELN (80 aa)) enclose the Cytochrome b5 heme-binding domain. Residue H118 coordinates heme b. Phosphoserine is present on S123. Heme b is bound by residues H143, Q145, and H147. Residues 165-174 (KVAPTVETSD) are hinge. Positions 175-401 (PYADDPVRHP…YSHWQRRDYK (227 aa)) are moco domain. Residues 215-219 (FTRNH), C264, D322, H361, R366, and 377-379 (HVK) each bind Mo-molybdopterin. A homodimerization region spans residues 402-538 (GFSPSVDWDT…RGVLSNAWHR (137 aa)).

Homodimer. Heme b is required as a cofactor. It depends on Mo-molybdopterin as a cofactor.

It localises to the mitochondrion intermembrane space. The enzyme catalyses sulfite + O2 + H2O = sulfate + H2O2. Its pathway is energy metabolism; sulfur metabolism. Catalyzes the oxidation of sulfite to sulfate, the terminal reaction in the oxidative degradation of sulfur-containing amino acids. The sequence is that of Sulfite oxidase, mitochondrial (SUOX) from Macaca fascicularis (Crab-eating macaque).